The chain runs to 196 residues: Adenylyl-sulfate kinase (196 aa).

Residue 31–38 (GLSGAGKS) participates in ATP binding. Ser105 acts as the Phosphoserine intermediate in catalysis.

The protein belongs to the APS kinase family.

The catalysed reaction is adenosine 5'-phosphosulfate + ATP = 3'-phosphoadenylyl sulfate + ADP + H(+). The protein operates within sulfur metabolism; hydrogen sulfide biosynthesis; sulfite from sulfate: step 2/3. Functionally, catalyzes the synthesis of activated sulfate. In Pseudomonas aeruginosa (strain ATCC 15692 / DSM 22644 / CIP 104116 / JCM 14847 / LMG 12228 / 1C / PRS 101 / PAO1), this protein is Adenylyl-sulfate kinase (cysC).